We begin with the raw amino-acid sequence, 723 residues long: MAALRWLSAVVAVSTTVLAITPEQMLSAPRRGEAIPNPSGNVALFSASQYSFDTKEKSSSWNLLNLKTGDITLLTDDANVSEIVWLGGDDTSLLYINGTNAEIPGGVELWVSSVKDFSKGYKAASLGASFSGLKAVRTRSGDIKFAVNAQSYANGTAYNEELATKYASTARIYDSIYVRHWDTYLTTTFNAVFAGTLKKGKHQYASAGPLKNLVAPVKNAESPYPPFGDSTDYDVSPDGKWVAFKSKAPDVPRANYTTAYIYLAPHDGSSTATPINGPDSPGTPEGVQGDANYPVFSPDSRHLAYFQMAHKSYESDRRVLYVYTLGSKTTTPAVAGDWNRSPDSAKWLDNKHLILGSEDHARVRLFGPVPIDADDDFKPQNFTDGGAVSSYHVLPDKTVLVTGTAIWTSWNVYTASPKKGVIKTIASANKIDPGLAGLGPEDISEFYYDGNWTKIQSWIIYPENFDSSKKYPLFFYIHGGPQSATPDSWSTRWNAKVFADQGYVVVAPNPTGSTGFGQELTDAIANNWGGAPYEDLVKAWEYVDKNLPYVDTENGVAAGASYGGFMINWIQGSDLGRKFKALVCHDGTFVADAKISTEELWFIEHDFNGTFWGARDNYRRWDPSAPERILQFSTPQLVIHSDQDYRLPVAEGLAMFNVLQERGVPSRFLNFPDENHWVLKQENSLVWHQQMLGWLNRYSGIEEANPDAVSLDDTIIPVVNYNP.

Positions Met1–Ala19 are cleaved as a signal peptide. N-linked (GlcNAc...) asparagine glycans are attached at residues Asn79, Asn97, Asn154, Asn255, Asn381, and Asn451. Ser561 functions as the Charge relay system in the catalytic mechanism. N-linked (GlcNAc...) asparagine glycosylation occurs at Asn608. Residues Asp644 and His676 each act as charge relay system in the active site.

This sequence belongs to the peptidase S9C family.

It localises to the secreted. Extracellular dipeptidyl-peptidase which removes N-terminal dipeptides sequentially from polypeptides having unsubstituted N-termini. The polypeptide is Probable dipeptidyl-peptidase 5 (dpp5) (Aspergillus terreus (strain NIH 2624 / FGSC A1156)).